The sequence spans 643 residues: Transducer protein Htr8 (643 aa).

The next 5 helical transmembrane spans lie at 48–68 (VFVLAHIPLLLALGLYEGTES), 79–99 (PGILIAAELGIVGALVGLASI), 115–134 (VLASSVVLVQFSGGFIEAHF), 149–169 (WLPFALGLVYVVFTHGVFGMI), and 184–204 (PWVWGGIHGAFVLLLAGALMA). The 54-residue stretch at 273-326 (ERLEATANTYGAAMARAADGDLSVRLDPDVENDAMAAIAASFNEMLDETETTIR) folds into the HAMP domain. Residues 345–581 (GVVEIEDASG…EAVSMIAEVS (237 aa)) enclose the Methyl-accepting transducer domain.

It belongs to the methyl-accepting chemotaxis (MCP) protein family. Post-translationally, methylated by CheR.

It localises to the cell membrane. Functionally, potentially involved in chemo- or phototactic signal transduction. The polypeptide is Transducer protein Htr8 (htr8) (Halobacterium salinarum (strain ATCC 29341 / DSM 671 / R1)).